The primary structure comprises 407 residues: Putative polysaccharide ligase RF_0568 (407 aa).

A run of 10 helical transmembrane segments spans residues 15 to 35 (LGMV…LMLF), 71 to 91 (MTIK…LFAI), 100 to 120 (FIQV…VPFG), 129 to 149 (LILG…SHGF), 166 to 186 (GCAL…SSGK), 203 to 223 (ISDS…FILA), 229 to 249 (IFFK…PVIA), 272 to 292 (LFIW…GYGF), 324 to 344 (ILQI…CLVY), and 379 to 399 (IWQI…KLLV).

This sequence belongs to the O-antigen ligase family.

The protein localises to the membrane. The protein is Putative polysaccharide ligase RF_0568 of Rickettsia felis (strain ATCC VR-1525 / URRWXCal2) (Rickettsia azadi).